A 226-amino-acid chain; its full sequence is uncharacterized protein (226 aa).

The protein belongs to the SSM1 family.

This is an uncharacterized protein from Schizosaccharomyces pombe (strain 972 / ATCC 24843) (Fission yeast).